The chain runs to 737 residues: FYVE, RhoGEF and PH domain-containing protein 3 (737 aa).

The interval 1 to 151 (MESGGGSSTP…KADKDAGLAQ (151 aa)) is disordered. Residues 126–136 (ADSDVGEEPDS) are compositionally biased toward acidic residues. The residue at position 128 (serine 128) is a Phosphoserine. The region spanning 157-341 (KLLHIAQELL…STAANHSNAA (185 aa)) is the DH domain. One can recognise a PH 1 domain in the interval 370–469 (ELIKEGQIQK…WIQIIQATIE (100 aa)). Residues 487-533 (QDEDPSLSPDMPITSTSPVEPVVTTEGGSGAAGLEPRKLSSKTRRDK) form a disordered region. The segment covering 500–512 (TSTSPVEPVVTTE) has biased composition (low complexity). Residues 521–533 (EPRKLSSKTRRDK) show a composition bias toward basic and acidic residues. An FYVE-type zinc finger spans residues 532–588 (DKEKQSCKSCGETFNSITKRRHHCKLCGVVICGKCSEFKAENSRQSRVCRECFLTQP). Residues cysteine 538, cysteine 541, cysteine 555, cysteine 558, cysteine 563, cysteine 566, cysteine 580, and cysteine 583 each coordinate Zn(2+). 2 disordered regions span residues 589 to 620 (VAPE…SLLC) and 713 to 737 (AARG…AAAP). The 100-residue stretch at 616–715 (PSLLCGPLRL…WLETLSTAAR (100 aa)) folds into the PH 2 domain.

It is found in the cytoplasm. The protein resides in the cytoskeleton. Promotes the formation of filopodia. May activate CDC42, a member of the Ras-like family of Rho- and Rac proteins, by exchanging bound GDP for free GTP. Plays a role in regulating the actin cytoskeleton and cell shape. This is FYVE, RhoGEF and PH domain-containing protein 3 (FGD3) from Pongo abelii (Sumatran orangutan).